Consider the following 390-residue polypeptide: MRYITAGESHGPQLTTILEGIPAGLPLVADDINAELARRQKGYGRGRRMQIEKDQVQIVSGVRHGQTIGAPIALIVENKDFAHWTKIMGAAPLTEQEKKEMKRQITRPRPGHADLNGAIKYGHRDMRNVLERSSARETTVRVAAGAVAKKVLAELGIKVAGHVIEIGGVRAEQTTYETIEQLQEITEASPVRCLDGEAGKKMMQAIDDAKASGDSIGGIVEVIVEGMPIGVGSYVHYDRKLDAKLAAAVMSINAFKGVEIGIGFEAAHRPGSQVHDEILWNEEEGYTRRTNHAGGLEGGMTTGMPVVVRGVMKPIPTLYKPLQSVDIETKESFSASIERSDSCAVPAASVVAEAVVAWELATALVEQFGADRMDCIRENIERHNEYAREF.

NADP(+) is bound by residues Arg39 and Arg45. FMN contacts are provided by residues 132-134 (RSS), 253-254 (NA), Gly298, 313-317 (KPIPT), and Arg339.

It belongs to the chorismate synthase family. Homotetramer. FMNH2 is required as a cofactor.

It catalyses the reaction 5-O-(1-carboxyvinyl)-3-phosphoshikimate = chorismate + phosphate. It functions in the pathway metabolic intermediate biosynthesis; chorismate biosynthesis; chorismate from D-erythrose 4-phosphate and phosphoenolpyruvate: step 7/7. Functionally, catalyzes the anti-1,4-elimination of the C-3 phosphate and the C-6 proR hydrogen from 5-enolpyruvylshikimate-3-phosphate (EPSP) to yield chorismate, which is the branch point compound that serves as the starting substrate for the three terminal pathways of aromatic amino acid biosynthesis. This reaction introduces a second double bond into the aromatic ring system. This chain is Chorismate synthase, found in Bacillus cytotoxicus (strain DSM 22905 / CIP 110041 / 391-98 / NVH 391-98).